The following is a 230-amino-acid chain: Probable GTP-binding protein EngB (230 aa).

In terms of domain architecture, EngB-type G spans 36-224 (ERPKVIVMGR…KHRINKRINI (189 aa)). GTP-binding positions include 44–51 (GRSNVGKS), 69–73 (GVTLK), 86–89 (DLPG), 166–169 (NKMD), and 201–203 (VPA). Mg(2+) is bound by residues S51 and T71.

Belongs to the TRAFAC class TrmE-Era-EngA-EngB-Septin-like GTPase superfamily. EngB GTPase family. The cofactor is Mg(2+).

Functionally, necessary for normal cell division and for the maintenance of normal septation. The chain is Probable GTP-binding protein EngB from Methanococcus maripaludis (strain DSM 14266 / JCM 13030 / NBRC 101832 / S2 / LL).